The following is a 171-amino-acid chain: S-ribosylhomocysteine lyase (171 aa).

Residues His54, His58, and Cys128 each coordinate Fe cation.

The protein belongs to the LuxS family. As to quaternary structure, homodimer. It depends on Fe cation as a cofactor.

The catalysed reaction is S-(5-deoxy-D-ribos-5-yl)-L-homocysteine = (S)-4,5-dihydroxypentane-2,3-dione + L-homocysteine. Functionally, involved in the synthesis of autoinducer 2 (AI-2) which is secreted by bacteria and is used to communicate both the cell density and the metabolic potential of the environment. The regulation of gene expression in response to changes in cell density is called quorum sensing. Catalyzes the transformation of S-ribosylhomocysteine (RHC) to homocysteine (HC) and 4,5-dihydroxy-2,3-pentadione (DPD). The protein is S-ribosylhomocysteine lyase of Pectobacterium carotovorum subsp. carotovorum (strain PC1).